A 190-amino-acid polypeptide reads, in one-letter code: Elongation factor P (190 aa).

This sequence belongs to the elongation factor P family.

The protein localises to the cytoplasm. Its pathway is protein biosynthesis; polypeptide chain elongation. Functionally, involved in peptide bond synthesis. Stimulates efficient translation and peptide-bond synthesis on native or reconstituted 70S ribosomes in vitro. Probably functions indirectly by altering the affinity of the ribosome for aminoacyl-tRNA, thus increasing their reactivity as acceptors for peptidyl transferase. In Pseudomonas fluorescens (strain SBW25), this protein is Elongation factor P.